Consider the following 327-residue polypeptide: Dipeptide transport ATP-binding protein DppD (327 aa).

Residues 4–254 form the ABC transporter domain; that stretch reads LNVDKLSVHF…PRHPYTQALL (251 aa). 40–47 is an ATP binding site; that stretch reads GESGSGKS.

Belongs to the ABC transporter superfamily. In terms of assembly, the complex is composed of two ATP-binding proteins (DppD and DppF), two transmembrane proteins (DppB and DppC) and a solute-binding protein (DppA). MppA can replace DppA as binding protein for heme and ALA transport.

It is found in the cell inner membrane. It carries out the reaction a dipeptide(out) + ATP + H2O = a dipeptide(in) + ADP + phosphate + H(+). Part of the ABC transporter DppABCDF involved in dipeptide transport. Responsible for energy coupling to the transport system. Its function is as follows. When a foreign outer membrane heme receptor is expressed in E.coli, DppABCDF can also transport heme and its precursor, 5-aminolevulinic acid (ALA), from the periplasm into the cytoplasm. This is Dipeptide transport ATP-binding protein DppD (dppD) from Escherichia coli (strain K12).